The sequence spans 305 residues: uncharacterized protein (305 aa).

A run of 3 helical transmembrane segments spans residues 52 to 72, 89 to 109, and 120 to 140; these read TINLTSAIIILVVGMFISKII, IAGFLSALMRYIIITFTFIAA, and VIAILGAAGMAIGLALQGSLS.

It belongs to the MscS (TC 1.A.23) family.

It localises to the cell membrane. This is an uncharacterized protein from Buchnera aphidicola subsp. Acyrthosiphon pisum (strain APS) (Acyrthosiphon pisum symbiotic bacterium).